Reading from the N-terminus, the 626-residue chain is Two-component response regulator ORR24 (626 aa).

The disordered stretch occupies residues 1-22 (MTVEERQGRVGGHGVSGGGGGR). The span at 9–22 (RVGGHGVSGGGGGR) shows a compositional bias: gly residues. The region spanning 30–145 (RVLAVDDDPT…QLRTIWQHVI (116 aa)) is the Response regulatory domain. D81 carries the 4-aspartylphosphate modification. Residues 151–162 (DAKNRGNDDDAG) are compositionally biased toward basic and acidic residues. 2 disordered regions span residues 151-215 (DAKN…KKPR) and 400-440 (LQPL…RTTN). Residues 191–202 (NGDDGDDSDENS) are compositionally biased toward acidic residues. A DNA-binding region (myb-like GARP) is located at residues 210 to 269 (TQKKPRVVWSVELHRKFVAAVNQLGIEKAVPKKILDLMNVENITRENVASHLQKYRLYLK). The span at 400-421 (LQPLESSSQQHLSRVHSSSADP) shows a compositional bias: polar residues.

This sequence belongs to the ARR family. Type-B subfamily. Post-translationally, two-component system major event consists of a His-to-Asp phosphorelay between a sensor histidine kinase (HK) and a response regulator (RR). In plants, the His-to-Asp phosphorelay involves an additional intermediate named Histidine-containing phosphotransfer protein (HPt). This multistep phosphorelay consists of a His-Asp-His-Asp sequential transfer of a phosphate group between first a His and an Asp of the HK protein, followed by the transfer to a conserved His of the HPt protein and finally the transfer to an Asp in the receiver domain of the RR protein.

It localises to the nucleus. In terms of biological role, transcriptional activator that binds specific DNA sequence. Functions as a response regulator involved in His-to-Asp phosphorelay signal transduction system. Phosphorylation of the Asp residue in the receiver domain activates the ability of the protein to promote the transcription of target genes. May directly activate some type-A response regulators in response to cytokinins. This chain is Two-component response regulator ORR24, found in Oryza sativa subsp. indica (Rice).